We begin with the raw amino-acid sequence, 263 residues long: MPSLWSNESDGSLREHLVDVVVSGSEPKIRVHDLTRVADDGSRILKGVTIDIPKGMIVGVIGPSGSGKSTFLRSLNRLWEPPESTVFLDGEDITNVDVIALRRRVGMLFQLPVLFQGTVADNVRYGPNLRGEKLSDEEVYKLLSLADLDASFAKKTGAELSVGQAQRVALARTLANEPEVLLLDEPTSALDPISTENIEDVIVKLKKQRGITTVIVSHSIKQIQKVADIVCLVVDGEIVEVLKPSELSHATHPMAQRFLQLSS.

Positions 29 to 260 (IRVHDLTRVA…THPMAQRFLQ (232 aa)) constitute an ABC transporter domain. 62-69 (GPSGSGKS) serves as a coordination point for ATP.

It belongs to the ABC transporter superfamily. ABCI family.

The chain is ABC transporter I family member 17 (ABCI17) from Arabidopsis thaliana (Mouse-ear cress).